We begin with the raw amino-acid sequence, 141 residues long: uncharacterized protein (141 aa).

Low complexity predominate over residues 1–39 (MNNNNNNNNNNNNNNNNNNNNNNNNNSYDSNHSSSSYTS). Residues 1–48 (MNNNNNNNNNNNNNNNNNNNNNNNNNSYDSNHSSSSYTSENQNREQQF) are disordered. A helical membrane pass occupies residues 109–129 (FFCKIILVFICLVAIYSLVVI).

It localises to the membrane. This is an uncharacterized protein from Dictyostelium discoideum (Social amoeba).